The primary structure comprises 318 residues: Acetyl-coenzyme A carboxylase carboxyl transferase subunit alpha (318 aa).

The CoA carboxyltransferase C-terminal domain maps to glutamate 36 to glutamine 293.

Belongs to the AccA family. In terms of assembly, acetyl-CoA carboxylase is a heterohexamer composed of biotin carboxyl carrier protein (AccB), biotin carboxylase (AccC) and two subunits each of ACCase subunit alpha (AccA) and ACCase subunit beta (AccD).

The protein resides in the cytoplasm. It carries out the reaction N(6)-carboxybiotinyl-L-lysyl-[protein] + acetyl-CoA = N(6)-biotinyl-L-lysyl-[protein] + malonyl-CoA. It functions in the pathway lipid metabolism; malonyl-CoA biosynthesis; malonyl-CoA from acetyl-CoA: step 1/1. In terms of biological role, component of the acetyl coenzyme A carboxylase (ACC) complex. First, biotin carboxylase catalyzes the carboxylation of biotin on its carrier protein (BCCP) and then the CO(2) group is transferred by the carboxyltransferase to acetyl-CoA to form malonyl-CoA. This chain is Acetyl-coenzyme A carboxylase carboxyl transferase subunit alpha, found in Teredinibacter turnerae (strain ATCC 39867 / T7901).